A 318-amino-acid polypeptide reads, in one-letter code: Homoserine O-succinyltransferase (318 aa).

C142 acts as the Acyl-thioester intermediate in catalysis. Positions 163 and 192 each coordinate substrate. The Proton acceptor role is filled by H235. The active site involves E237. R249 is a substrate binding site.

It belongs to the MetA family.

The protein localises to the cytoplasm. The enzyme catalyses L-homoserine + succinyl-CoA = O-succinyl-L-homoserine + CoA. Its pathway is amino-acid biosynthesis; L-methionine biosynthesis via de novo pathway; O-succinyl-L-homoserine from L-homoserine: step 1/1. Transfers a succinyl group from succinyl-CoA to L-homoserine, forming succinyl-L-homoserine. The sequence is that of Homoserine O-succinyltransferase from Shewanella putrefaciens (strain CN-32 / ATCC BAA-453).